We begin with the raw amino-acid sequence, 180 residues long: UPF0227 protein YcfP (180 aa).

It belongs to the UPF0227 family.

The chain is UPF0227 protein YcfP from Escherichia coli O9:H4 (strain HS).